A 752-amino-acid polypeptide reads, in one-letter code: Probable GTP-binding protein OBGC1, chloroplastic (752 aa).

The transit peptide at 1–90 (MAPAVAVVAA…RFPTANPEPR (90 aa)) directs the protein to the chloroplast. Residues 19 to 121 (FSAEARRNTK…EEDEVELGLR (103 aa)) are disordered. A compositionally biased stretch (basic residues) spans 26 to 36 (NTKGSRSKRGS). Positions 103-117 (GDDEEDEEEEEDEVE) are enriched in acidic residues. Residues 294–452 (MRCFDTAKIY…MWIDLELKLV (159 aa)) enclose the Obg domain. One can recognise an OBG-type G domain in the interval 453–621 (ADVGIVGAPN…VVLAAYKVLQ (169 aa)). GTP contacts are provided by residues 459 to 466 (GAPNAGKS), 484 to 488 (FTTLL), 506 to 509 (DLPG), 573 to 576 (NKMD), and 602 to 604 (SAM). Mg(2+) is bound by residues Ser-466 and Thr-486. In terms of domain architecture, OCT spans 649 to 728 (ERRAPMNEFE…VGEMEMVWTD (80 aa)). The tract at residues 728-752 (DEPSKTRSSKTMNSKDDSVRWPEFG) is disordered. A compositionally biased stretch (basic and acidic residues) spans 740–752 (NSKDDSVRWPEFG).

Belongs to the TRAFAC class OBG-HflX-like GTPase superfamily. OBG GTPase family. Mg(2+) serves as cofactor.

Its subcellular location is the plastid. It is found in the chloroplast. Functionally, probable GTP-binding protein that may play a role in chloroplast development. This chain is Probable GTP-binding protein OBGC1, chloroplastic (OBGC1), found in Oryza sativa subsp. indica (Rice).